A 450-amino-acid polypeptide reads, in one-letter code: Sorting nexin-4 (450 aa).

Position 1 is an N-acetylmethionine (Met-1). The interval 1–53 is disordered; sequence MEQAAPDPERLWQPAPLEPLSHPDAGLESMVGEETKGARDEGPGDGTMTENNF. Over residues 33 to 42 the composition is skewed to basic and acidic residues; that stretch reads EETKGARDEG. A PX domain is found at 61 to 187; that stretch reads SVSEAEKRTG…YLFLTQEGNW (127 aa). A 1,2-diacyl-sn-glycero-3-phospho-(1D-myo-inositol-3-phosphate)-binding residues include Arg-106, Ser-108, Lys-132, and Arg-154.

Belongs to the sorting nexin family. As to quaternary structure, heterodimer; heterodimerizes with SNX7 or SNX30. Interacts with WWC1/KIBRA. Identified in a complex with WWC1/KIBRA and dynein components DYNLL1 and DYNC1I2. Interacts with BIN1.

Its subcellular location is the early endosome. The protein localises to the early endosome membrane. Functionally, involved in the regulation of endocytosis and in several stages of intracellular trafficking. Plays a role in recycling endocytosed transferrin receptor and prevent its degradation. Involved in autophagosome assembly by regulating trafficking and recycling of phospholipid scramblase ATG9A. The chain is Sorting nexin-4 from Bos taurus (Bovine).